Consider the following 358-residue polypeptide: MKTLTVELGERSYPIFIGQGLLGQAELFKPYVTGTQVLIVSNTTVAPLYLEKAKQAFSGYDVKTVILPDGEQYKNLDVLNQIFDVAIENRFDRKCTFVALGGGVIGDMTGFAAASYQRGVNFIQIPTTLLSQVDSSVGGKTGVNHPKGKNMIGAFHQPECVVIDTDTLNTLEDRELSAGLAEVIKYGLIVDYPFFEWLEQNLPGLLARDPVVLAEAIERSCQNKATIVAKDEKEAGLRALFNLGHTFGHAIEAGMGYGNWLHGEGVSAGMMQAVYLSKLMGDLTQTDQKRIAAILQSAHLPVMPPKEMSVQQFLDLMAGDKKVQAGQIRLVLLKAIGQAYVTGDYPAELLERTLIEYR.

NAD(+)-binding positions include 69-74 (DGEQYK), 103-107 (GVIGD), 127-128 (TT), K140, K149, and 167-170 (TLNT). Zn(2+) is bound by residues E182, H245, and H262.

This sequence belongs to the sugar phosphate cyclases superfamily. Dehydroquinate synthase family. Requires Co(2+) as cofactor. The cofactor is Zn(2+). It depends on NAD(+) as a cofactor.

The protein resides in the cytoplasm. The catalysed reaction is 7-phospho-2-dehydro-3-deoxy-D-arabino-heptonate = 3-dehydroquinate + phosphate. Its pathway is metabolic intermediate biosynthesis; chorismate biosynthesis; chorismate from D-erythrose 4-phosphate and phosphoenolpyruvate: step 2/7. Functionally, catalyzes the conversion of 3-deoxy-D-arabino-heptulosonate 7-phosphate (DAHP) to dehydroquinate (DHQ). This is 3-dehydroquinate synthase from Hydrogenovibrio crunogenus (strain DSM 25203 / XCL-2) (Thiomicrospira crunogena).